The sequence spans 370 residues: Pantothenate kinase 3 (370 aa).

The Proton acceptor role is filled by glutamate 138. Acetyl-CoA-binding residues include serine 192, serine 195, and arginine 207.

Belongs to the type II pantothenate kinase family. Homodimer.

Its subcellular location is the cytoplasm. The enzyme catalyses (R)-pantothenate + ATP = (R)-4'-phosphopantothenate + ADP + H(+). It functions in the pathway cofactor biosynthesis; coenzyme A biosynthesis; CoA from (R)-pantothenate: step 1/5. Subject to allosteric regulation, exists in two distinct conformational states, a catalytically incompetent (or open) conformation stabilized by the binding of acetyl(acyl)-CoA, and a catalytically competent (or closed) conformation stabilized by ATP-binding. Inhibited by acetyl-CoA and its thioesters which act as allosteric inhibitors and compete with the ATP-binding site. In terms of biological role, catalyzes the phosphorylation of pantothenate to generate 4'-phosphopantothenate in the first and rate-determining step of coenzyme A (CoA) synthesis. The polypeptide is Pantothenate kinase 3 (PANK3) (Bos taurus (Bovine)).